The following is a 397-amino-acid chain: Protein WRKY1 (397 aa).

Residues 326-392 (KVADIPADEF…YEGDHNHNRV (67 aa)) constitute a DNA-binding region (WRKY).

The protein belongs to the WRKY group II-d family. Interacts with RS2. As to expression, more abundant in apices and young leaf primordia than in fully expanded leaf tissues.

Its subcellular location is the nucleus. Its function is as follows. Transcription factor. Interacts specifically with the W box (5'-(T)TGAC[CT]-3'), a frequently occurring elicitor-responsive cis-acting element. The chain is Protein WRKY1 from Zea mays (Maize).